Reading from the N-terminus, the 721-residue chain is MAEKFESLMNIHGFDLGSRYMDLKPLGCGGNGLVFSAVDNDCDKRVAIKKIVLTDPQSVKHALREIKIIRRLDHDNIVKVFEILGPSGSQLTDDVGSLTELNSVYIVQEYMETDLANVLEQGPLLEEHARLFMYQLLRGLKYIHSANVLHRDLKPANLFINTEDLVLKIGDFGLARIMDPHYSHKGHLSEGLVTKWYRSPRLLLSPNNYTKAIDMWAAGCIFAEMLTGKTLFAGAHELEQMQLILESIPVVHEEDRQELLSVIPVYIRNDMTEPHKPLTQLLPGISREALDFLEQILTFSPMDRLTAEEALSHPYMSIYSFPMDEPISSHPFHIEDEVDDILLMDETHSHIYNWERYHDCQFSEHDWPVHNNFDIDEVQLDPRALSDVTDEEEVQVDPRKYLDGDREKYLEDPAFDTNYSTEPCWQYSDHHENKYCDLECGHTCNYKTRSSSYLDNLVWRESEVNHYYEPKLIIDLSNWKEQSKEKSDKKGKSKCERNGLVKAQIALEEASQQLAGKEREKNQGFDFDSFIAGTIQLSSQHEPTDVVDKLNDLNSSVSQLELKSLISKSVSQEKQEKGMANLAQLEALYQSSWDSQFVNGGEDCFFINQFCEVRKDEQVEKENTYTSYLDKFFSRKEDTEMLETEPVEDGKLGERGHEEGFLNNSGEFLFNKQLESIGIPQFHSPVGSPLKSIQATLTPSAMKSSPQIPHQTYSSILKHLN.

A Peptide (Met-Gly) (interchain with G-Cter in ubiquitin) cross-link involves residue M1. The Protein kinase domain maps to 20 to 316 (YMDLKPLGCG…AEEALSHPYM (297 aa)). Residues 26 to 34 (LGCGGNGLV) and K49 each bind ATP. The active-site Proton acceptor is D152. S189 bears the Phosphoserine; by PAK1, PAK2 and PAK3 mark. Residues 189–191 (SEG) carry the SEG motif motif. Positions 332–337 (FHIEDE) match the FRIEDE motif motif. 6 positions are modified to phosphoserine: S386, S452, S556, S558, S665, and S684. The segment covering 701 to 715 (AMKSSPQIPHQTYSS) has biased composition (polar residues). Residues 701–721 (AMKSSPQIPHQTYSSILKHLN) form a disordered region.

Belongs to the protein kinase superfamily. CMGC Ser/Thr protein kinase family. MAP kinase subfamily. Heterodimer with ERK4/MAPK4. Interacts with (via FRIEDE motif) MAPKAPK5. Interacts with UBE3A; this interaction may be indirect and mediated by HERC2, possibly via HERC2 interaction with NEURL4. Mg(2+) is required as a cofactor. In terms of processing, phosphorylated at Ser-189 by PAK1, PAK2 and PAK3 resulting in catalytic activation. Phosphorylated by MAPKAPK5 at other sites. Post-translationally, ubiquitination at Met-1 leads to degradation by the proteasome pathway.

Its subcellular location is the cytoplasm. The protein localises to the nucleus. The catalysed reaction is L-seryl-[protein] + ATP = O-phospho-L-seryl-[protein] + ADP + H(+). It catalyses the reaction L-threonyl-[protein] + ATP = O-phospho-L-threonyl-[protein] + ADP + H(+). Activated by phosphorylation at Ser-189. Functionally, atypical MAPK protein. Phosphorylates microtubule-associated protein 2 (MAP2) and MAPKAPK5. The precise role of the complex formed with MAPKAPK5 is still unclear, but the complex follows a complex set of phosphorylation events: upon interaction with atypical MAPKAPK5, ERK3/MAPK6 is phosphorylated at Ser-189 and then mediates phosphorylation and activation of MAPKAPK5, which in turn phosphorylates ERK3/MAPK6. May promote entry in the cell cycle. The protein is Mitogen-activated protein kinase 6 (MAPK6) of Pongo abelii (Sumatran orangutan).